A 1914-amino-acid polypeptide reads, in one-letter code: Diacylglycerol kinase eta (1914 aa).

Over residues 1-10 (MSHLKLDTLH) the composition is skewed to basic and acidic residues. A disordered region spans residues 1–37 (MSHLKLDTLHVQRSPRGSRRSSRSSGRSSACSSGSIS). The span at 23 to 37 (RSSGRSSACSSGSIS) shows a compositional bias: low complexity. The region spanning 82–175 (AIIKEGFLLK…WLGSLKTATA (94 aa)) is the PH domain. 2 Phorbol-ester/DAG-type zinc fingers span residues 195–245 (HHHW…IANC) and 268–319 (PHQW…AVAC). In terms of domain architecture, DAGKc spans 350–486 (GNFSPLLVFV…DRWSIMVFEK (137 aa)). 5 disordered regions span residues 621-642 (EKDQ…SEKE), 783-805 (GANI…NTPT), 1016-1053 (TLCS…PPRI), 1116-1135 (QHRG…TPTN), and 1175-1216 (PNTI…TVSL). Residues 1175-1187 (PNTILTTSTSPTK) are compositionally biased toward polar residues. Residues 1851 to 1914 (WSVNEVVTWL…LQAIKDLSEN (64 aa)) enclose the SAM domain.

This sequence belongs to the eukaryotic diacylglycerol kinase family.

Its subcellular location is the cytoplasm. It carries out the reaction a 1,2-diacyl-sn-glycerol + ATP = a 1,2-diacyl-sn-glycero-3-phosphate + ADP + H(+). Phosphorylates diacylglycerol (DAG) to generate phosphatidic acid (PA). The sequence is that of Diacylglycerol kinase eta from Drosophila sechellia (Fruit fly).